The primary structure comprises 284 residues: NAD kinase (284 aa).

D60 (proton acceptor) is an active-site residue. NAD(+)-binding positions include 60–61, 134–135, K145, R162, D164, and Q235; these read DG and ND.

Belongs to the NAD kinase family. A divalent metal cation is required as a cofactor.

The protein localises to the cytoplasm. The catalysed reaction is NAD(+) + ATP = ADP + NADP(+) + H(+). Functionally, involved in the regulation of the intracellular balance of NAD and NADP, and is a key enzyme in the biosynthesis of NADP. Catalyzes specifically the phosphorylation on 2'-hydroxyl of the adenosine moiety of NAD to yield NADP. This is NAD kinase from Treponema denticola (strain ATCC 35405 / DSM 14222 / CIP 103919 / JCM 8153 / KCTC 15104).